A 444-amino-acid chain; its full sequence is Exodeoxyribonuclease 7 large subunit (444 aa).

This sequence belongs to the XseA family. In terms of assembly, heterooligomer composed of large and small subunits.

It is found in the cytoplasm. It catalyses the reaction Exonucleolytic cleavage in either 5'- to 3'- or 3'- to 5'-direction to yield nucleoside 5'-phosphates.. Its function is as follows. Bidirectionally degrades single-stranded DNA into large acid-insoluble oligonucleotides, which are then degraded further into small acid-soluble oligonucleotides. In Aliivibrio salmonicida (strain LFI1238) (Vibrio salmonicida (strain LFI1238)), this protein is Exodeoxyribonuclease 7 large subunit.